A 163-amino-acid chain; its full sequence is Nucleotide-binding protein YajQ (163 aa).

Belongs to the YajQ family.

Functionally, nucleotide-binding protein. The chain is Nucleotide-binding protein YajQ from Escherichia coli (strain K12 / DH10B).